The sequence spans 182 residues: Doublesex- and mab-3-related transcription factor C1 (182 aa).

Position 15 is a phosphoserine (Thr-15). Residues 26 to 39 are compositionally biased toward polar residues; that stretch reads AQVDTATQEESSQG. Disordered regions lie at residues 26-48 and 136-174; these read AQVDTATQEESSQGPVLLNQHPE and QTRHQPCGMPGTAGERGLQLANPSMPPRPTSSGSLPSGH.

This sequence belongs to the DMRT family. In terms of tissue distribution, expressed in Sertoli cells in male testis.

The chain is Doublesex- and mab-3-related transcription factor C1 (Dmrtc1) from Mus musculus (Mouse).